A 449-amino-acid polypeptide reads, in one-letter code: MSKFSPPINRNMVELDRSFFHKEVPLLAAYFPNPKFLGQFVKSCQNDILYVQTVKHIISMDDSKAILLRDDVKSISDLNPETQLKINEFGIILKPYTLKLDYSFWKSEEILKSILPENLIDDVPSGFSQAGHLAHINLRDEYKPFGKLIGQVILDKNPSVLTVVDKVNTIANKFRTFPLELLAGEPNYIVEQSESGCKFKFDFSKVYWNSRLSTEHERIIGKFNSGDVVGDVFGGVGPFAIPASKKNVIVLANDLNPESYKYLQENIKINKVEPFIKPFNLDGREFIRKAPELLLQWHNSQNGIIEKKIIKKVSIDDNKTKKNFERKPIIETTKIPKFYHHFVMNLPDSALTFLDEFIGLYGSNPQLKTDPEFKLPIIHVHCFEKFENNENPTPEELHNRVYEKICKLIQFPLNKEKMEFHEVRMVSPTKPMFCVSFELPEEVAFKQSK.

S-adenosyl-L-methionine contacts are provided by residues His-216, 254–255, 282–283, and Asn-345; these read DL and DG.

It belongs to the class I-like SAM-binding methyltransferase superfamily. TRM5/TYW2 family. As to quaternary structure, monomer.

Its subcellular location is the mitochondrion matrix. The protein resides in the nucleus. It localises to the cytoplasm. The enzyme catalyses guanosine(37) in tRNA + S-adenosyl-L-methionine = N(1)-methylguanosine(37) in tRNA + S-adenosyl-L-homocysteine + H(+). In terms of biological role, specifically methylates the N1 position of guanosine-37 in various cytoplasmic and mitochondrial tRNAs. Methylation is not dependent on the nature of the nucleoside 5' of the target nucleoside. This is the first step in the biosynthesis of wybutosine (yW), a modified base adjacent to the anticodon of tRNAs and required for accurate decoding. In Candida albicans (strain SC5314 / ATCC MYA-2876) (Yeast), this protein is tRNA (guanine(37)-N(1))-methyltransferase.